We begin with the raw amino-acid sequence, 256 residues long: Large ribosomal subunit protein eL8B (256 aa).

A disordered region spans residues 1–37; it reads MAPGKKVAPAPFGAKSTKSNKAKNPLTHSTPKNFGIG.

This sequence belongs to the eukaryotic ribosomal protein eL8 family. As to quaternary structure, component of the large ribosomal subunit (LSU). Mature yeast ribosomes consist of a small (40S) and a large (60S) subunit. The 40S small subunit contains 1 molecule of ribosomal RNA (18S rRNA) and 33 different proteins (encoded by 57 genes). The large 60S subunit contains 3 rRNA molecules (25S, 5.8S and 5S rRNA) and 46 different proteins (encoded by 81 genes).

The protein localises to the cytoplasm. Functionally, component of the ribosome, a large ribonucleoprotein complex responsible for the synthesis of proteins in the cell. The small ribosomal subunit (SSU) binds messenger RNAs (mRNAs) and translates the encoded message by selecting cognate aminoacyl-transfer RNA (tRNA) molecules. The large subunit (LSU) contains the ribosomal catalytic site termed the peptidyl transferase center (PTC), which catalyzes the formation of peptide bonds, thereby polymerizing the amino acids delivered by tRNAs into a polypeptide chain. The nascent polypeptides leave the ribosome through a tunnel in the LSU and interact with protein factors that function in enzymatic processing, targeting, and the membrane insertion of nascent chains at the exit of the ribosomal tunnel. This is Large ribosomal subunit protein eL8B from Saccharomyces cerevisiae (strain ATCC 204508 / S288c) (Baker's yeast).